A 2153-amino-acid chain; its full sequence is MEGPSRVYLFGDQTSDIEAGLRRLLQAKNSTIVQSFFQQCFHAIRQEIAKLPPSHRKLFPRFTSIVDLLSRSRESGPSPVLESALTCIYQLGCFIHFYGDLGHDYPTPSNSHLVGLCTGVLSCTAVSCARNVGELIPAAVESVVIALRLGICVFRVRELVDSADSESTCWSALVSGISEAEASHLIDEYSSKKATPPSSKPYISAVSSNGVTVSAPPTVLDEFVETCISKNYKPVKAPIHGPYHAPHLYDDKDIDRILQQSSALEGLTGCSPVIPIISSNTGKPIKAKSIKDLFKVALEEILLRRLCWDKVTESCTSVCKTGTNHSCKLFPISSSATQSLFTVLKKAGVSISLETGVGEIATNPEMRNLTGKAENSKIAIIGMSGRFPDSDGTESFWNLLYKGLDVHRKVPADRWDVDAHVDMTGSKRNTSKVAYGCWINEPGLFDPRFFNMSPREALQADPAQRLALLTAYEALEMAGFIPDSSPSTQRDRVGIFYGMTSDDYREINSGQDIDTYFIPGGNRAFTPGRINYYFKFSGPSVSVDTACSSSLAAIHMACNSIWRNDCDAAITGGVNILTSPDNHAGLDRGHFLSTTGNCNTFDDGADGYCRADGVGSIVLKRLEDAEADNDPILAVINGAYTNHSAEAVSITRPHVGAQAFIFNKLLNDANIDPKDVSYVEMHGTGTQAGDAVEMQSVLDVFAPDYRRGPGQSLHIGSAKANIGHGESASGVTALVKVLLMMRENMIPPHCGIKTKINSNFPTDLAKRNVHIAFQPTPWNRPASGKRRTFVNNFSAAGGNTALLLEDAPIPERQGQDPRSFHLVSVSARSQSALKNNVEALVKYIDSQGKSFGVKETEFLPNLAYTTTARRIHHPFRVIAVGANLQSLRDSLHGALHRETYTPVPSTAPGIGFVFTGQGAQYSGMGKELYRSCFQFRTTIEHFDCIARSQGLPSILPLVDGSVAVEELSPVVVQVGTTCVQMALVNYWTALGVKPAFIIGHSLGDYAALNTAGVLSTSDTIYLCGRRAQLLTKECKIGTHSMLAIKASLAEVKHFLRDELHEVSCVNAPAETVVSGLVADIDELAQKCSTEGLKSTKLKVPYAFHSSQVDPILEAFEDIAQGVTFHKPTTPFVSALFGEVITDANWECLGPKYLRDHCRKTVNFLGGVEATRHAKLTNDKTLWVEIGSHTICSGMIKATLGPQVTTVASLRREEDTWKVLSNSLASLHLAGIDINWKQYHQDFSSSLQVLRLPAYKWDLKNYWIPYTNNFCLSKGAPVATVAAGPQHEYLTTAAQKVIETRSDGATATVVIENDIADPELNRVIQGHKVNGTALCPSSLYADISQTLAEYLIKKYKPEYDGLGLDVCEVTVPRPLIAKGGQQLFRVSATADWAEKKTTLQIYSVTAEGKKTADHATCTVRFFDCAAAEAEWKRVSYLVKRSIDRLHDIAENGDAHRLGRGMVYKLFAALVDYDDNFKSIREVILDSEQHEATARVKFQAPQGNFHRNPFWIDSFGHLSGFIMNASDATDSKNQVFVNHGWDSMRCLKKFSPDVTYRTYVRMQPWKDSIWAGDVYVFDGDDIVAVYGAVKFQALSRKILDTVLPPVGASKGPARPAASAQKAAPAAAASKSRASAPAPAKPAAKPSAPSLVKRALTILAEEVGLSESEITDDLVFADYGVDSLLSLTVTGRYREELDIDLESSIFIDQPTVKDFKQFLAPMSQGEASDGSTSDPESSSSFNGGSSTDESSAGSPVSSPPNEKVTQVEQHATIKEIRAILADEIGVTEEELKDDENLGEMGMDSLLSLTVLGRIRETLDLDLPGEFFIENQTLNDVEDALGLKPKAAPAPAPAPAPVPAPVSAPILKEPVPNANSTIMARASPHPRSTSILLQGNPKTATKTLFLFPDGSGSATSYATIPGVSPDVCVYGLNCPYMKTPEKLKYPLAEMTFPYLAEIRRRQPKGPYNFGGWSAGGICAYDAARYLILEEGEQVDRLLLLDSPFPIGLEKLPTRLYGFINSMGLFGEGNKAPPAWLLPHFLAFIDSLDTYKAVPLPFDDPKWAKKMPKTFMVWAKDGICSKPDDPWPEPDPDGKPDTREMVWLLKNRTDMGPNKWDTLVGPQNVGGITVIEGANHFTMTLGPKAKELGSFIGNAMAN.

Residues 8-244 (YLFGDQTSDI…VKAPIHGPYH (237 aa)) form an N-terminal acylcarrier protein transacylase domain (SAT) region. A Ketosynthase family 3 (KS3) domain is found at 375–806 (NSKIAIIGMS…GGNTALLLED (432 aa)). Catalysis depends on for beta-ketoacyl synthase activity residues Cys547, His682, and His724. Residues 912 to 1232 (FVFTGQGAQY…LASLHLAGID (321 aa)) form a malonyl-CoA:ACP transacylase (MAT) domain region. Ser1001 acts as the For acyl/malonyl transferase activity in catalysis. The segment at 1286 to 1425 (HEYLTTAAQK…CTVRFFDCAA (140 aa)) is N-terminal hotdog fold. One can recognise a PKS/mFAS DH domain in the interval 1286–1598 (HEYLTTAAQK…FQALSRKILD (313 aa)). The product template (PT) domain stretch occupies residues 1290 to 1603 (TTAAQKVIET…RKILDTVLPP (314 aa)). His1326 acts as the Proton acceptor; for dehydratase activity in catalysis. Positions 1452-1598 (DAHRLGRGMV…FQALSRKILD (147 aa)) are C-terminal hotdog fold. The active-site Proton donor; for dehydratase activity is the Asp1511. The interval 1608 to 1643 (KGPARPAASAQKAAPAAAASKSRASAPAPAKPAAKP) is disordered. The segment covering 1610-1643 (PARPAASAQKAAPAAAASKSRASAPAPAKPAAKP) has biased composition (low complexity). Residues 1643–1720 (PSAPSLVKRA…DFKQFLAPMS (78 aa)) form the Carrier 1 domain. Ser1680 carries the O-(pantetheine 4'-phosphoryl)serine modification. Positions 1720–1765 (SQGEASDGSTSDPESSSSFNGGSSTDESSAGSPVSSPPNEKVTQVE) are disordered. The span at 1725 to 1748 (SDGSTSDPESSSSFNGGSSTDESS) shows a compositional bias: low complexity. The span at 1749–1765 (AGSPVSSPPNEKVTQVE) shows a compositional bias: polar residues. The Carrier 2 domain occupies 1764-1841 (VEQHATIKEI…DVEDALGLKP (78 aa)). Ser1801 is modified (O-(pantetheine 4'-phosphoryl)serine). The segment at 1879–2151 (SPHPRSTSIL…ELGSFIGNAM (273 aa)) is claisen cyclase domain. The active-site For Claisen cyclase activity is the Ser1969.

The catalysed reaction is 6 malonyl-CoA + acetyl-CoA + 6 H(+) = naphtopyrone YWA1 + 6 CO2 + 7 CoA + H2O. The protein operates within secondary metabolite biosynthesis. Functionally, non-reducing polyketide synthase; part of the gene cluster that mediates the biosynthesis of aurasperone B, a dimeric gamma-naphthopyrone. The first step in the biosynthesis of aurasperone B is the production of gamma-naphthopyrone precursor YWA1 by the non-reducing polyketide synthase albA, via condensation of one acetyl-CoA starter unit with 6 malonyl-CoA units. YWA1 is then methylated by aunE at position C-6 to yield foncesin which is further methylated at position C-8 by aunD to produce fonsecin B. A key enzyme in the biosynthetic pathway is the cytochrome P450 monooxygenase aunB which catalyzes the oxidative dimerization of fonsecin B to aurasperone B. AunB also catalyzes the oxidative dimerization of rubrofusarin B into aurasperone A. This Aspergillus niger (strain ATCC MYA-4892 / CBS 513.88 / FGSC A1513) protein is Non-reducing polyketide synthase albA.